The following is a 180-amino-acid chain: MTLKELVVGFGTQVRSLWMIGLHAFHKRETLMYPEEPVYLPPRYRGRIVLTRDPDGEERCVACNLCAVACPVGCISLQKAEQKDGRWYPEFFRINFSRCIFCGLCEEACPTTAIQLTPDFEMGEFKRQDLVYEKEDLLISGPGKYPEYNFYRMAGMAIDGKQKGEAENEAKPIDVKGLMP.

4Fe-4S ferredoxin-type domains are found at residues 50 to 80 and 90 to 119; these read LTRDPDGEERCVACNLCAVACPVGCISLQKA and EFFRINFSRCIFCGLCEEACPTTAIQLTPD. [4Fe-4S] cluster-binding residues include Cys-60, Cys-63, Cys-66, Cys-70, Cys-99, Cys-102, Cys-105, and Cys-109.

This sequence belongs to the complex I 23 kDa subunit family. NDH-1 is composed of 13 different subunits. Subunits NuoA, H, J, K, L, M, N constitute the membrane sector of the complex. It depends on [4Fe-4S] cluster as a cofactor.

Its subcellular location is the cell inner membrane. The enzyme catalyses a quinone + NADH + 5 H(+)(in) = a quinol + NAD(+) + 4 H(+)(out). In terms of biological role, NDH-1 shuttles electrons from NADH, via FMN and iron-sulfur (Fe-S) centers, to quinones in the respiratory chain. The immediate electron acceptor for the enzyme in this species is believed to be ubiquinone. Couples the redox reaction to proton translocation (for every two electrons transferred, four hydrogen ions are translocated across the cytoplasmic membrane), and thus conserves the redox energy in a proton gradient. In Yersinia pseudotuberculosis serotype O:1b (strain IP 31758), this protein is NADH-quinone oxidoreductase subunit I.